Reading from the N-terminus, the 690-residue chain is Wilms tumor protein 1-interacting protein homolog (690 aa).

Disordered stretches follow at residues 151–316 (MSAT…VSPR) and 328–372 (TLGS…PRSS). Residues 152-186 (SATSPRSSMASSASSSQEHSKYSSPRSSISSNALS) show a composition bias toward low complexity. Composition is skewed to polar residues over residues 204 to 214 (EKYTSPRSSLG), 223 to 233 (PRSSYASTTSD), 240 to 261 (PRAS…TSGI), and 272 to 292 (PRSS…SYSD). A compositionally biased stretch (low complexity) spans 335–357 (SVVSPRSSISSHSSRSSRSSRGS). LIM zinc-binding domains lie at 479-540 (GICI…SGFQ), 544-603 (DKCF…TVFA), and 604-673 (PKCA…RLSV).

Belongs to the zyxin/ajuba family. In terms of assembly, interacts with prickle3.

Its subcellular location is the cell junction. The protein localises to the adherens junction. The protein resides in the nucleus. In terms of biological role, may monitor slit diaphragm protein assembly, a specialized adherens junction characteristic of podocytes. In case of podocyte injury, it shuttles into the nucleus and acts as a transcription regulator. Plays a role in the regulation of cell morphology and cytoskeletal organization. Acts as a transcriptional corepressor for snai1 and snai2/slug and plays a role in regulating neural crest development. Involved in the organization of the basal body. Involved in cilia growth and positioning. This is Wilms tumor protein 1-interacting protein homolog (wtip) from Xenopus laevis (African clawed frog).